A 304-amino-acid chain; its full sequence is Bifunctional protein FolD (304 aa).

Residues 167–169 (GRS), serine 192, and isoleucine 233 contribute to the NADP(+) site.

This sequence belongs to the tetrahydrofolate dehydrogenase/cyclohydrolase family. In terms of assembly, homodimer.

It catalyses the reaction (6R)-5,10-methylene-5,6,7,8-tetrahydrofolate + NADP(+) = (6R)-5,10-methenyltetrahydrofolate + NADPH. The enzyme catalyses (6R)-5,10-methenyltetrahydrofolate + H2O = (6R)-10-formyltetrahydrofolate + H(+). The protein operates within one-carbon metabolism; tetrahydrofolate interconversion. Its function is as follows. Catalyzes the oxidation of 5,10-methylenetetrahydrofolate to 5,10-methenyltetrahydrofolate and then the hydrolysis of 5,10-methenyltetrahydrofolate to 10-formyltetrahydrofolate. This chain is Bifunctional protein FolD, found in Rhodospirillum centenum (strain ATCC 51521 / SW).